The primary structure comprises 395 residues: Protein-arginine rhamnosyltransferase (395 aa).

DTDP-beta-L-rhamnose contacts are provided by residues 19-22 (NYGD), Tyr-205, Gln-272, and 288-292 (RGEDS). Catalysis depends on Asp-22, which acts as the Proton acceptor. Glu-290 is an active-site residue.

Belongs to the glycosyltransferase 104 family.

The catalysed reaction is dTDP-beta-L-rhamnose + L-arginyl-[protein] = N(omega)-(alpha-L-rhamnosyl)-L-arginyl-[protein] + dTDP + H(+). Functionally, protein-arginine rhamnosyltransferase that catalyzes the transfer of a single rhamnose to elongation factor P (EF-P) on 'Lys-32', a modification required for EF-P-dependent rescue of polyproline stalled ribosomes. This Shewanella oneidensis (strain ATCC 700550 / JCM 31522 / CIP 106686 / LMG 19005 / NCIMB 14063 / MR-1) protein is Protein-arginine rhamnosyltransferase.